Here is a 119-residue protein sequence, read N- to C-terminus: Aspartate 1-decarboxylase (119 aa).

S25 (schiff-base intermediate with substrate; via pyruvic acid) is an active-site residue. S25 is modified (pyruvic acid (Ser)). Position 57 (T57) interacts with substrate. Residue Y58 is the Proton donor of the active site. Residue 73 to 75 participates in substrate binding; sequence GAA.

Belongs to the PanD family. Heterooctamer of four alpha and four beta subunits. Requires pyruvate as cofactor. In terms of processing, is synthesized initially as an inactive proenzyme, which is activated by self-cleavage at a specific serine bond to produce a beta-subunit with a hydroxyl group at its C-terminus and an alpha-subunit with a pyruvoyl group at its N-terminus.

It is found in the cytoplasm. It catalyses the reaction L-aspartate + H(+) = beta-alanine + CO2. It participates in cofactor biosynthesis; (R)-pantothenate biosynthesis; beta-alanine from L-aspartate: step 1/1. Functionally, catalyzes the pyruvoyl-dependent decarboxylation of aspartate to produce beta-alanine. In Ruthia magnifica subsp. Calyptogena magnifica, this protein is Aspartate 1-decarboxylase.